A 641-amino-acid polypeptide reads, in one-letter code: Methionine--tRNA ligase (641 aa).

Positions 13 to 23 (YYPSAKLHIGN) match the 'HIGH' region motif. Positions 128, 131, 145, and 148 each coordinate Zn(2+). Residues 298 to 302 (KMSKS) carry the 'KMSKS' region motif. K301 is an ATP binding site. The tRNA-binding domain maps to 539 to 641 (DFDKIDLRVV…GELPTGSQVR (103 aa)).

It belongs to the class-I aminoacyl-tRNA synthetase family. MetG type 2A subfamily. Homodimer. Zn(2+) serves as cofactor.

The protein resides in the cytoplasm. The catalysed reaction is tRNA(Met) + L-methionine + ATP = L-methionyl-tRNA(Met) + AMP + diphosphate. In terms of biological role, is required not only for elongation of protein synthesis but also for the initiation of all mRNA translation through initiator tRNA(fMet) aminoacylation. The chain is Methionine--tRNA ligase from Clostridium tetani (strain Massachusetts / E88).